Consider the following 874-residue polypeptide: Alanine--tRNA ligase (874 aa).

Zn(2+)-binding residues include His562, His566, Cys664, and His668.

Belongs to the class-II aminoacyl-tRNA synthetase family. It depends on Zn(2+) as a cofactor.

It is found in the cytoplasm. It catalyses the reaction tRNA(Ala) + L-alanine + ATP = L-alanyl-tRNA(Ala) + AMP + diphosphate. Functionally, catalyzes the attachment of alanine to tRNA(Ala) in a two-step reaction: alanine is first activated by ATP to form Ala-AMP and then transferred to the acceptor end of tRNA(Ala). Also edits incorrectly charged Ser-tRNA(Ala) and Gly-tRNA(Ala) via its editing domain. In Shewanella baltica (strain OS155 / ATCC BAA-1091), this protein is Alanine--tRNA ligase.